Reading from the N-terminus, the 298-residue chain is MIPPGIPVVQLSFPIGSRIRSISVPTGTHNALDRILSRPSPKMKFTDYLNGALACGVAGAAYKALDNFGWGRVSAVIGGVTVGLCAAFGPKKITELNALSDQMLAEATEDIKRERLTKALSTFTILAASRAPINTWTTRPRERFDALTGIPARWDDALCEMEFDRTCGSGERGLHALHALSGVIVGELERLLVEGHVSTDLAQVYLTMLIVTLFRDDEFGRALLKVDSIILALESRIDTVRLEEIQRVMCASVTRFHGVRPGFETEAFAKMHDAINRCGLYGTARGEPSEVEEPGSTV.

This is an uncharacterized protein from Ictalurid herpesvirus 1 (strain Auburn) (IcHV-1).